The chain runs to 215 residues: Nucleoside triphosphate pyrophosphatase (215 aa).

This sequence belongs to the Maf family. It depends on a divalent metal cation as a cofactor.

It is found in the cytoplasm. The enzyme catalyses a ribonucleoside 5'-triphosphate + H2O = a ribonucleoside 5'-phosphate + diphosphate + H(+). The catalysed reaction is a 2'-deoxyribonucleoside 5'-triphosphate + H2O = a 2'-deoxyribonucleoside 5'-phosphate + diphosphate + H(+). In terms of biological role, nucleoside triphosphate pyrophosphatase. May have a dual role in cell division arrest and in preventing the incorporation of modified nucleotides into cellular nucleic acids. The chain is Nucleoside triphosphate pyrophosphatase from Rickettsia conorii (strain ATCC VR-613 / Malish 7).